A 1639-amino-acid polypeptide reads, in one-letter code: MRGEDSDLCFDCLDQRINSDFSDQIVFSYGVSDSPLPFGSSAVVKVSDSSEEFSASCSSCESTSSQFILEYLRKDEHGCLAKYVDKFVVKDREGNSNDAVESDECLDCSTSGSQATEDDDTENITCGSVTCEHSGSFSCWRTVAALLPIAQIRKCSASELQKLASSFHYECPEDQILASLHRLIDGKSSGQATHSFLCLLLGLPLLEEKSKLRCLRHPNLSPVLGLLTSSDCLVSVLPKAPYTLENILYYSPSAIKSEWHRNFIIYQLLSALAHLHGLKVSHGDIRPSNILLSDSLWSWLTIYSKPDLGSVDANSSASRRRWCVEGCYSYGLYADLKISSHLDWQTHFDKWWKGELSNFEYLLVLNKLAGRRWGDHTFHPVMPWVIDFSKKPENDSDSGWRDLRKSKWRLAKGDEQLDFTYSTFEFPHHVSDECLSELAVCSYKARRLPLSVLRKAVRSVYEPNEYPSDMQRLYDWTPDECIPEFYCDPRIFCSLHPSMSDLAVPPWASSPDEFIRLHRDALESPHVSSLIHHWIDITFGYKMSGHAAITAKNVMLSSSEPTVPRSVGRRQLFFRPHPVRLGFSREKEQSRNELEMHTFHGFGVDNKRSVILLADEYLEETEEASAFSDHATHLCPKYHLRENLVESPLHVSYSENTKKVNTSLPGTSKNKGLSSRISLNYLLEHMEVRDEASTELQELLQWRQDFCTGNISKDIAGDIFSIGCVLAELYLMKPLFNSVSLATYLEGGDLPELIKELPPPTQVIVEACIEQDWRRRPSAKSLLDSPYFSATVRSAHLFAAPLQLLAKGQTRLCYAASFAKQGVLKVMGTFVAEMCAVYCLPLVTTPLSEDECELAYVLLKEFTKSLTPMAVQRLVLPSIQKILLTTGYSHLKVSLLQDSFVRELWNQIGKRVYLEMIHPLVISNLYNSPDKISASAASVLLIGSSEELGAPVTVHQTILPLISYFGKGICTDGIDVLVRIGRLLGVNFIVKQMLPLLEHVVCFCIDLSSMKKPEPVHSWCSLALSDCLITLDGLVALISDELLIHELTKGRLCLHVRVLMQKNLELRVLQFAATSLMSICQRIGQEMTALHVLPQLKELFDEFAFSEKSTDASDSLSWKIRTAEQKFHPESPIKSRMDLVLLLYPSFASLLGMEKLRQGCPTWLLLEQYLLKHHNWKWEYTGRSSRYNMEARPVLKQGPASKHTPKVLLNGSGRSVPQSQGLRNSNHLKLHIHVPVEGQEAVLNPLVHEPWSWFPSPVTCWDGLDIGRFGNPKDENRWKIRASVLSSARAHHGALRSLVVSEDECTVFTSGIDPGFKGSVQKWELASLSCVSSYHAHEEVVNDIGILSSTGKVASCDGTIHVWNSQTGKLISLFSESPSDQDQASSDPSSKNNSNPCNRHASHGLSSGIFDENLYTCMHYLEYMDQLIVGTGFGALRFIDLARGQKLELWGGEAIESGFTSLVSALCSGGSQTKHGDGASVSPSWIAAGFSSGQCRLFDLRENGFISSWRAHDGYVTKLVAPESHLLVSSSLDKTLRIWDLRKSWTPQPFVVKGHNDGVSGFSIWGKDVISISRNNIGIFSLAKSQDEEEQQQQRIIPQKLYMAEKGGRVKSDLSTICVLPFSRLFIVGAHDGHLRICC.

The Protein kinase 1 domain occupies 206–294 (LEEKSKLRCL…IRPSNILLSD (89 aa)). Residues 336-608 (LKISSHLDWQ…FHGFGVDNKR (273 aa)) enclose the BEACH domain. Residues 715-788 (IAGDIFSIGC…AKSLLDSPYF (74 aa)) form the Protein kinase 2 domain. WD repeat units follow at residues 1290 to 1333 (AHHG…CVSS) and 1336 to 1373 (AHEE…LISL). Residues 1377–1398 (SPSDQDQASSDPSSKNNSNPCN) show a composition bias toward low complexity. A disordered region spans residues 1377-1399 (SPSDQDQASSDPSSKNNSNPCNR). 3 WD repeats span residues 1465–1499 (ALCS…RLFD), 1511–1549 (AHDG…TPQP), and 1609–1639 (RVKS…RICC).

This sequence belongs to the protein kinase superfamily. Tyr protein kinase family. In terms of assembly, interacts (via protein kinase 2 domain) with BCHC1 (via PH-BEACH domain). Weakly expressed in the cotyledons of germinating seedlings. Restricted to the vascular tissues of cotyledons. Detected in root tips, apical meristem, young flower buds and receptacles.

May act predominantly to suppress BCHC1, which itself is a negative factor in protein storage vacuole (PSV) trafficking regulation and plant effector triggered immunity (ETI). Required for ETI, but not for cell death. The protein is Protein GFS12 of Arabidopsis thaliana (Mouse-ear cress).